The primary structure comprises 462 residues: C4-dicarboxylate transport transcriptional regulatory protein DctD (462 aa).

Residues 12–126 (QVLLIDDDPH…ALLDSVRRAL (115 aa)) form the Response regulatory domain. D61 is modified (4-aspartylphosphate). The 230-residue stretch at 152-381 (LIGRSAGMQR…LQNAAERFAL (230 aa)) folds into the Sigma-54 factor interaction domain. Residues 180–187 (GETGAGKE) and 243–252 (ANGGTLFLDE) each bind ATP.

In terms of processing, phosphorylated by DctB.

In terms of biological role, member of the two-component regulatory system DctB/DctD, which regulates C4-dicarboxylate transport via regulation of expression of the dctPQM operon and dctA. The chain is C4-dicarboxylate transport transcriptional regulatory protein DctD from Pseudomonas aeruginosa (strain ATCC 15692 / DSM 22644 / CIP 104116 / JCM 14847 / LMG 12228 / 1C / PRS 101 / PAO1).